We begin with the raw amino-acid sequence, 70 residues long: Mu-agatoxin-Ao1b (70 aa).

A signal peptide spans 1-20 (MKAIIFFCFLSVMVFIVAEA). Positions 21 to 33 (SSLEALKIFEGER) are excised as a propeptide. 4 cysteine pairs are disulfide-bonded: C35–C50, C42–C55, C49–C65, and C57–C63. At N69 the chain carries Asparagine amide.

The protein belongs to the neurotoxin 07 (Beta/delta-agtx) family. 04 (aga-5) subfamily. Expressed by the venom gland.

It is found in the secreted. Insecticidal neurotoxin that modulates the insect Nav channel (DmNaV1/tipE (para/tipE)) in a unique manner, with both the activation and inactivation processes being affected. The voltage dependence of activation is shifted toward more hyperpolarized potentials (analogous to site 4 toxins) and a non-inactivating persistent sodium current is induced (site 3-like action). Interestingly, both effects take place in a voltage-dependent manner, producing a bell-shaped curve between -80 and 0 mV. In Agelena orientalis (Funnel-web spider), this protein is Mu-agatoxin-Ao1b.